The sequence spans 85 residues: MAKEELIEMHGLVDEVLPDSRFRVTLDNGHKLVAYTSGKMRKNHIRILAGDQVSLELSPYDLSKGRITFRHIAGRGPGPAQRPSR.

Residues 1–72 enclose the S1-like domain; it reads MAKEELIEMH…SKGRITFRHI (72 aa).

It belongs to the IF-1 family. Component of the 30S ribosomal translation pre-initiation complex which assembles on the 30S ribosome in the order IF-2 and IF-3, IF-1 and N-formylmethionyl-tRNA(fMet); mRNA recruitment can occur at any time during PIC assembly.

Its subcellular location is the cytoplasm. Its function is as follows. One of the essential components for the initiation of protein synthesis. Stabilizes the binding of IF-2 and IF-3 on the 30S subunit to which N-formylmethionyl-tRNA(fMet) subsequently binds. Helps modulate mRNA selection, yielding the 30S pre-initiation complex (PIC). Upon addition of the 50S ribosomal subunit IF-1, IF-2 and IF-3 are released leaving the mature 70S translation initiation complex. In Polaromonas sp. (strain JS666 / ATCC BAA-500), this protein is Translation initiation factor IF-1 2.